A 367-amino-acid polypeptide reads, in one-letter code: Serine/threonine-protein kinase-transforming protein Rmil (367 aa).

The segment at 1–64 (EGGSTAGLSA…DSSDDWEIPD (64 aa)) is disordered. Residues 33–57 (QRERKSSSSSEDRNRMKTLGRRDSS) show a composition bias toward basic and acidic residues. The region spanning 67 to 327 (ITVGQRIGSG…PQILASIELL (261 aa)) is the Protein kinase domain. Residues 73–81 (IGSGSFGTV) and Lys-93 contribute to the ATP site. Asp-186 (proton acceptor) is an active-site residue.

The protein belongs to the protein kinase superfamily. TKL Ser/Thr protein kinase family. RAF subfamily.

It catalyses the reaction L-seryl-[protein] + ATP = O-phospho-L-seryl-[protein] + ADP + H(+). It carries out the reaction L-threonyl-[protein] + ATP = O-phospho-L-threonyl-[protein] + ADP + H(+). In Avian retrovirus IC10, this protein is Serine/threonine-protein kinase-transforming protein Rmil (V-RMIL).